The sequence spans 79 residues: Protein RALF-like 15 (79 aa).

Positions 1–28 (MGMSKSIKVIVSLALILFLALAATKVEA) are cleaved as a signal peptide. Intrachain disulfides connect Cys46-Cys54 and Cys66-Cys72.

This sequence belongs to the plant rapid alkalinization factor (RALF) family.

The protein localises to the secreted. Functionally, cell signaling peptide that may regulate plant stress, growth, and development. Mediates a rapid alkalinization of extracellular space by mediating a transient increase in the cytoplasmic Ca(2+) concentration leading to a calcium-dependent signaling events through a cell surface receptor and a concomitant activation of some intracellular mitogen-activated protein kinases. The sequence is that of Protein RALF-like 15 (RALFL15) from Arabidopsis thaliana (Mouse-ear cress).